We begin with the raw amino-acid sequence, 260 residues long: MIIVLSPAKSLDYETPPHVSHHTLPQFADDAAALIDELRRLSPQQIGTLMSISDPLARLNFQRYADWSRTSTPANAKQAVLAFNGDVYEGLDARSLSPDDLDYAQRHVRVLSGLYGLLRPLDLLQPYRLEMGTRFTNARGKDLYAFWGERITHALNAELKTREGASRVLVNCASAEYFKSVKPKLLDARVVTPVFEDWKDGRYKIISFHAKRARGLMARYVVEGRIGSPDVLKDFASEGYAFDEAASNDDTFVFRRRAGA.

The protein belongs to the UPF0246 family.

This chain is UPF0246 protein BTH_I1090, found in Burkholderia thailandensis (strain ATCC 700388 / DSM 13276 / CCUG 48851 / CIP 106301 / E264).